We begin with the raw amino-acid sequence, 146 residues long: Large ribosomal subunit protein uL15 (146 aa).

The segment at 1-65 is disordered; the sequence is MSDIQLNTLK…GQMPLQRRLP (65 aa). Gly residues predominate over residues 24–34; that stretch reads RGIGSGLGKTA.

Belongs to the universal ribosomal protein uL15 family. Part of the 50S ribosomal subunit.

Binds to the 23S rRNA. The sequence is that of Large ribosomal subunit protein uL15 from Bordetella parapertussis (strain 12822 / ATCC BAA-587 / NCTC 13253).